We begin with the raw amino-acid sequence, 355 residues long: Tetraacyldisaccharide 4'-kinase (355 aa).

64 to 71 (YVGGTGKT) serves as a coordination point for ATP. A disordered region spans residues 206 to 226 (NRAPQSSATPTAASGQGPRRA). Residues 208–222 (APQSSATPTAASGQG) are compositionally biased toward low complexity.

It belongs to the LpxK family.

The catalysed reaction is a lipid A disaccharide + ATP = a lipid IVA + ADP + H(+). Its pathway is glycolipid biosynthesis; lipid IV(A) biosynthesis; lipid IV(A) from (3R)-3-hydroxytetradecanoyl-[acyl-carrier-protein] and UDP-N-acetyl-alpha-D-glucosamine: step 6/6. Its function is as follows. Transfers the gamma-phosphate of ATP to the 4'-position of a tetraacyldisaccharide 1-phosphate intermediate (termed DS-1-P) to form tetraacyldisaccharide 1,4'-bis-phosphate (lipid IVA). This Bordetella petrii (strain ATCC BAA-461 / DSM 12804 / CCUG 43448) protein is Tetraacyldisaccharide 4'-kinase.